Reading from the N-terminus, the 400-residue chain is Acetate kinase (400 aa).

Asn7 provides a ligand contact to Mg(2+). Residue Lys14 coordinates ATP. Substrate is bound at residue Arg91. Asp148 (proton donor/acceptor) is an active-site residue. ATP is bound by residues 208–212 (HIGNG), 283–285 (DFR), and 332–336 (GIGEH). A Mg(2+)-binding site is contributed by Glu387.

Belongs to the acetokinase family. As to quaternary structure, homodimer. Mg(2+) is required as a cofactor. Requires Mn(2+) as cofactor.

It localises to the cytoplasm. It carries out the reaction acetate + ATP = acetyl phosphate + ADP. It participates in metabolic intermediate biosynthesis; acetyl-CoA biosynthesis; acetyl-CoA from acetate: step 1/2. Functionally, catalyzes the formation of acetyl phosphate from acetate and ATP. Can also catalyze the reverse reaction. The sequence is that of Acetate kinase from Clostridium beijerinckii (strain ATCC 51743 / NCIMB 8052) (Clostridium acetobutylicum).